We begin with the raw amino-acid sequence, 477 residues long: Adenylyl cyclase-associated protein 2 (477 aa).

A2 carries the post-translational modification N-acetylalanine. Disordered stretches follow at residues L225 to S261 and T274 to H321. The span at G230–L246 shows a compositional bias: pro residues. Positions Q298–K320 are enriched in low complexity. Phosphoserine occurs at positions 301 and 309. One can recognise a C-CAP/cofactor C-like domain in the interval P317 to I455.

This sequence belongs to the CAP family.

It localises to the cell membrane. Involved in the regulation of actin polymerization. The sequence is that of Adenylyl cyclase-associated protein 2 (CAP2) from Homo sapiens (Human).